Here is a 115-residue protein sequence, read N- to C-terminus: Large ribosomal subunit protein bL19 (115 aa).

It belongs to the bacterial ribosomal protein bL19 family.

Its function is as follows. This protein is located at the 30S-50S ribosomal subunit interface and may play a role in the structure and function of the aminoacyl-tRNA binding site. The protein is Large ribosomal subunit protein bL19 of Hydrogenovibrio crunogenus (strain DSM 25203 / XCL-2) (Thiomicrospira crunogena).